We begin with the raw amino-acid sequence, 149 residues long: Macrodomain Ter protein (149 aa).

This sequence belongs to the MatP family. In terms of assembly, homodimer.

Its subcellular location is the cytoplasm. Required for spatial organization of the terminus region of the chromosome (Ter macrodomain) during the cell cycle. Prevents early segregation of duplicated Ter macrodomains during cell division. Binds specifically to matS, which is a 13 bp signature motif repeated within the Ter macrodomain. The sequence is that of Macrodomain Ter protein from Vibrio campbellii (strain ATCC BAA-1116).